We begin with the raw amino-acid sequence, 337 residues long: Putative long-chain-alcohol O-fatty-acyltransferase 10 (337 aa).

Transmembrane regions (helical) follow at residues 7-27 (SFVK…YIPS), 38-58 (SVLP…FTIF), 59-79 (SSTT…LFAF), 82-102 (GPLL…CLPI), 142-162 (ILLL…LLTI), 228-248 (MGCM…YFYI), 254-274 (TLEV…EIAV), and 285-305 (MLLR…LFFG).

This sequence belongs to the wax synthase family.

It localises to the membrane. The catalysed reaction is a long chain fatty alcohol + a fatty acyl-CoA = a wax ester + CoA. Functionally, catalyzes the final step in the synthesis of long-chain linear esters (waxes). The sequence is that of Putative long-chain-alcohol O-fatty-acyltransferase 10 from Arabidopsis thaliana (Mouse-ear cress).